Consider the following 732-residue polypeptide: Engulfment and cell motility protein 2 (732 aa).

Tyr-48 bears the Phosphotyrosine mark. Positions 323–497 (AQRDIIFELR…VVREQITRAL (175 aa)) constitute an ELMO domain. A Phosphoserine modification is found at Ser-515. The PH domain maps to 565–686 (SSFRKIGNRR…LLGKDMSSEL (122 aa)). Residues 712-719 (PEAPPPVP) carry the SH3-binding motif. Tyr-729 carries the phosphotyrosine modification.

As to quaternary structure, interacts directly with the SH3-domain of DOCK1 via its SH3-binding site. Probably forms a heterotrimeric complex with DOCK1 and RAC1. Interacts with ARHGEF16, DOCK4 and EPHA2; mediates activation of RAC1 by EPHA2. Interacts with ADGRB3. Interacts with AUTS2; the interaction is direct.

It localises to the cytoplasm. The protein localises to the cytosol. The protein resides in the membrane. Involved in cytoskeletal rearrangements required for phagocytosis of apoptotic cells and cell motility. Acts in association with DOCK1 and CRK. Was initially proposed to be required in complex with DOCK1 to activate Rac Rho small GTPases. May enhance the guanine nucleotide exchange factor (GEF) activity of DOCK1. The protein is Engulfment and cell motility protein 2 (Elmo2) of Mus musculus (Mouse).